The sequence spans 107 residues: U1-lycotoxin-Ls1b (107 aa).

Positions 1 to 20 are cleaved as a signal peptide; it reads MMKVLVVVALLATLISYSSS. Positions 21–41 are excised as a propeptide; that stretch reads EGIDDLEADELLSLMANEQTR. Disulfide bonds link Cys-44–Cys-59, Cys-51–Cys-68, Cys-58–Cys-86, and Cys-70–Cys-84.

Belongs to the neurotoxin 19 (CSTX) family. 04 (U1-Lctx) subfamily. Expressed by the venom gland.

Its subcellular location is the secreted. The sequence is that of U1-lycotoxin-Ls1b from Lycosa singoriensis (Wolf spider).